Consider the following 211-residue polypeptide: Agamous-like MADS-box protein AGL12 (211 aa).

Residues 3-57 (RGKIQLKRIENPVHRQVTFCKRRTGLLKKAKELSVLCDAEIGVVIFSPQGKLFEL) form the MADS-box domain. Positions 95–185 (NLDPKDEINV…LEKIEENNNS (91 aa)) constitute a K-box domain.

As to expression, preferentially expressed in roots. In root meristem, expressed in external cells of columella, lateral root cap and atrichoblasts. In mature root, expressed in the central cylinder. Expressed in leaf vasculature, young floral meristems and nectaries.

Its subcellular location is the nucleus. In terms of biological role, probable transcription activator that regulates root development by controlling cell proliferation in root meristem. May mediate responses to auxin in the root. May act as promoter of the flowering transition through up-regulation of SOC, FT and LFY. This is Agamous-like MADS-box protein AGL12 from Arabidopsis thaliana (Mouse-ear cress).